The chain runs to 433 residues: D-amino acid dehydrogenase (433 aa).

3 to 17 lines the FAD pocket; sequence VLVLGSGVIGTTSAY.

This sequence belongs to the DadA oxidoreductase family. FAD is required as a cofactor.

It catalyses the reaction a D-alpha-amino acid + A + H2O = a 2-oxocarboxylate + AH2 + NH4(+). It functions in the pathway amino-acid degradation; D-alanine degradation; NH(3) and pyruvate from D-alanine: step 1/1. Functionally, oxidative deamination of D-amino acids. In Pseudomonas savastanoi pv. phaseolicola (strain 1448A / Race 6) (Pseudomonas syringae pv. phaseolicola (strain 1448A / Race 6)), this protein is D-amino acid dehydrogenase.